Reading from the N-terminus, the 641-residue chain is Uromodulin (641 aa).

The signal sequence occupies residues 1–24; the sequence is MGQPPLTWMLMVVVASWFITTAAT. Asn-25 carries an N-linked (GlcNAc...) asparagine glycan. Residues 28 to 64 enclose the EGF-like 1 domain; it reads EARWCSECHSNATCTEDEAVTTCTCQEGFTGDGLTCV. Cystine bridges form between Cys-32/Cys-41, Cys-35/Cys-50, Cys-52/Cys-63, Cys-69/Cys-83, Cys-77/Cys-92, Cys-94/Cys-106, Cys-112/Cys-126, Cys-120/Cys-135, Cys-137/Cys-148, Cys-150/Cys-161, Cys-155/Cys-170, Cys-174/Cys-267, Cys-195/Cys-282, Cys-217/Cys-255, Cys-223/Cys-287, Cys-248/Cys-256, Cys-297/Cys-306, Cys-300/Cys-315, Cys-317/Cys-347, Cys-335/Cys-425, and Cys-366/Cys-389. Positions 65–107 constitute an EGF-like 2; calcium-binding domain; sequence DLDECAIPGAHNCSANSSCVNTPGSFSCVCPEGFRLSPGLGCT. Asn-76 carries N-linked (GlcNAc...) asparagine glycosylation. Positions 108–149 constitute an EGF-like 3; calcium-binding domain; that stretch reads DVDECAEPGLSHCHALATCVNVVGNYLCVCPAGYRGDGWHCE. Residues 150 to 171 form a beta hairpin region; that stretch reads CSPGSCGPGLDCVPEGDALVCA. The D10C stretch occupies residues 172 to 291; it reads DPCQAHRTLD…CHLAYCTDPS (120 aa). Asn-232 is a glycosylation site (N-linked (GlcNAc...) asparagine). Asn-275 is a glycosylation site (N-linked (GlcNAc...) asparagine). The 32-residue stretch at 292–323 folds into the EGF-like 4 domain; it reads SVEGTCEECSIDEDCKSDNGRWHCQCKQDFNI. N-linked (GlcNAc...) asparagine glycosylation occurs at Asn-322. The segment at 334-429 is ZP-N; that stretch reads ECGANDMKVS…KINFACSYPL (96 aa). In terms of domain architecture, ZP spans 334-589; that stretch reads ECGANDMKVS…PTCSGTRFRS (256 aa). Residues 430-453 form a flexible ZP-N/ZP-C linker; important for secretion and polymerization into filaments region; sequence DMKVSLKTSLQPVVSALNITVGGT. Asn-447 carries an N-linked (GlcNAc...) asparagine glycan. Residues 454-464 are internal hydrophobic patch (IHP); the sequence is GMFTVRMALFQ. The interval 454–589 is ZP-C; sequence GMFTVRMALF…PTCSGTRFRS (136 aa). 3 disulfide bridges follow: Cys-506/Cys-566, Cys-527/Cys-582, and Cys-571/Cys-578. Residues 586–589 form an essential for cleavage by HPN region; it reads RFRS. The external hydrophobic patch (EHP); regulates polymerization into filaments stretch occupies residues 598 to 606; sequence VLNLGPITR. Residue Ser-614 is the site of GPI-anchor amidated serine attachment. A propeptide spans 615-641 (removed in mature form); sequence RAAFSSLGLLKVWLPLLLSATLTLTFQ.

Homodimer that then polymerizes into long filaments. The filaments can additionally assemble laterally to form a sheet. The filaments consist of a zigzag-shaped backbone with laterally protruding arms which interact with bacterial adhesin fimH. Two fimH molecules can bind to a single UMOD monomer. In terms of processing, N-glycosylated. Proteolytically cleaved at a conserved C-terminal proteolytic cleavage site to generate the secreted form found in urine. This cleavage is catalyzed by HPN.

The protein resides in the apical cell membrane. It localises to the basolateral cell membrane. The protein localises to the cell projection. Its subcellular location is the cilium membrane. It is found in the secreted. Functionally, functions in biogenesis and organization of the apical membrane of epithelial cells of the thick ascending limb of Henle's loop (TALH), where it promotes formation of complex filamentous gel-like structure that may play a role in the water barrier permeability. May serve as a receptor for binding and endocytosis of cytokines (IL-1, IL-2) and TNF. Facilitates neutrophil migration across renal epithelia. In terms of biological role, in the urine, may contribute to colloid osmotic pressure, retards passage of positively charged electrolytes, and inhibits formation of liquid containing supersaturated salts and subsequent formation of salt crystals. Protects against urinary tract infections by binding to type 1 fimbriated E.coli. Binds to bacterial adhesin fimH which mediates the stable formation of bacterial aggregates, prevents the binding of E.coli to uroplakins UPK1A and UPK1B which act as urothelial receptors for type I fimbriae, and allows for pathogen clearance through micturation. Also promotes aggregation of other bacteria including K.pneumoniae, P.aeruginosa and S.mitis and so may also protect against other uropathogens. In Pongo abelii (Sumatran orangutan), this protein is Uromodulin (UMOD).